The sequence spans 339 residues: UDP-glucose 4-epimerase (339 aa).

NAD(+) is bound by residues 12-13 (FI), 32-37 (DNLCNS), 59-60 (DI), 81-85 (FAGLK), N100, S125, Y150, K154, and F179. Substrate is bound by residues S125 and Y150. Catalysis depends on Y150, which acts as the Proton acceptor. Substrate contacts are provided by residues N180, 200-201 (NL), 217-219 (AVF), R232, and 293-296 (RAGD).

The protein belongs to the NAD(P)-dependent epimerase/dehydratase family. In terms of assembly, homodimer. It depends on NAD(+) as a cofactor.

The catalysed reaction is UDP-alpha-D-glucose = UDP-alpha-D-galactose. Its pathway is carbohydrate metabolism; galactose metabolism. Functionally, involved in the metabolism of galactose. Plays an essential role in the incorporation of galactose into meningococcal lipopolysaccharide surface molecules, which are important for pathogenesis. Catalyzes the conversion of UDP-galactose (UDP-Gal) to UDP-glucose (UDP-Glc) through a mechanism involving the transient reduction of NAD. The sequence is that of UDP-glucose 4-epimerase (galE) from Neisseria meningitidis serogroup C.